The following is a 517-amino-acid chain: E3 ubiquitin-protein ligase TRIM65 (517 aa).

N-acetylalanine is present on Ala2. Residues 12 to 51 (CAICLGLYQDPVTLPCGHNFCGACIRDWWDRCGKACPECR) form an RING-type zinc finger. The tract at residues 75–94 (AGPARDPGPDPGPGPDPAAR) is disordered. The B box-type zinc-finger motif lies at 90–137 (DPAARCPRHGRPLELFCRTEGRCVCSVCTVRECRLHERALLDAERLKR). Residues Cys95, His98, Cys117, and His125 each contribute to the Zn(2+) site. Residues 139 to 227 (AQLRASLEVT…QRLRVHLEAV (89 aa)) adopt a coiled-coil conformation. Phosphoserine is present on Ser185. A (Microbial infection) Glycyl lysine isopeptide (Lys-Gly) (interchain with G-Cter in ubiquitin) cross-link involves residue Lys206. In terms of domain architecture, B30.2/SPRY spans 313 to 506 (APVPSTVCPL…LTLCHQPGAV (194 aa)).

It belongs to the TRIM/RBCC family. As to quaternary structure, homo-multimerizes. Interacts with ARRDC4.

It localises to the cytoplasm. It carries out the reaction S-ubiquitinyl-[E2 ubiquitin-conjugating enzyme]-L-cysteine + [acceptor protein]-L-lysine = [E2 ubiquitin-conjugating enzyme]-L-cysteine + N(6)-ubiquitinyl-[acceptor protein]-L-lysine.. The protein operates within protein modification; protein ubiquitination. Its function is as follows. E3 ubiquitin ligase that plays a role in several processes including innate immnity, autophagy or inflammation. Negatively regulates miRNAs by modulating the ubiquitination and stability of TNRC6A, a protein involved in RNA-mediated gene silencing by both micro-RNAs (miRNAs) and short interfering RNAs. This ubiquitination results in the suppressed expression of miR-138-5p leading to increased autophagy. Upon enteroviral infection, promotes 'Lys-63'-mediated ubiquitination activation of IFIH1/MDA5 leading to innate signaling cascade. Mechanistically, selectively recognizes MDA5 filaments that occur on dsRNAs. Plays also a role in limitation of inflammation through different mechanisms. First, promotes 'Lys-48'-mediated ubiquitination of VCAM1 leading to its degradation and limitation of LPS-induced lung inflammation. In addition, negatively regulates inflammasome activation by promoting 'lys48'-linked ubiquitination of NLRP3 which is critical for the inhibition of NLRP3 inflammasome activation in resting macrophages. This Homo sapiens (Human) protein is E3 ubiquitin-protein ligase TRIM65 (TRIM65).